The primary structure comprises 237 residues: NAD-dependent protein deacylase (237 aa).

The Deacetylase sirtuin-type domain occupies 1 to 235 (MRIAVLSGAG…PGLLQRLPAL (235 aa)). NAD(+) is bound at residue 8–28 (GAGISAESGVPTFRDDKNGLW). Positions 53 and 56 each coordinate substrate. Residue 86–89 (QNVD) coordinates NAD(+). His-104 acts as the Proton acceptor in catalysis. Residues Cys-112, Cys-115, Cys-138, and Cys-140 each coordinate Zn(2+). NAD(+) is bound by residues 177 to 179 (GTS), 203 to 205 (NPE), and Ala-221.

The protein belongs to the sirtuin family. Class III subfamily. Zn(2+) serves as cofactor.

It localises to the cytoplasm. The enzyme catalyses N(6)-acetyl-L-lysyl-[protein] + NAD(+) + H2O = 2''-O-acetyl-ADP-D-ribose + nicotinamide + L-lysyl-[protein]. The catalysed reaction is N(6)-succinyl-L-lysyl-[protein] + NAD(+) + H2O = 2''-O-succinyl-ADP-D-ribose + nicotinamide + L-lysyl-[protein]. Functionally, NAD-dependent lysine deacetylase and desuccinylase that specifically removes acetyl and succinyl groups on target proteins. Modulates the activities of several proteins which are inactive in their acylated form. This is NAD-dependent protein deacylase from Mycolicibacterium paratuberculosis (strain ATCC BAA-968 / K-10) (Mycobacterium paratuberculosis).